The chain runs to 78 residues: Large ribosomal subunit protein bL28 (78 aa).

Residues 1–23 (MSRVCQVTGKKPMVGNNRSHAKN) are disordered.

Belongs to the bacterial ribosomal protein bL28 family.

The chain is Large ribosomal subunit protein bL28 from Shewanella frigidimarina (strain NCIMB 400).